The primary structure comprises 832 residues: Receptor-interacting serine/threonine-protein kinase 4 (832 aa).

The Protein kinase domain occupies 22–286 (FTGWEKVGSG…QGNGLNGELI (265 aa)). ATP contacts are provided by residues 28 to 36 (VGSGGFGQV) and Lys51. Lys51 is covalently cross-linked (Glycyl lysine isopeptide (Lys-Gly) (interchain with G-Cter in ubiquitin)). The active-site Proton acceptor is Asp143. A Glycyl lysine isopeptide (Lys-Gly) (interchain with G-Cter in ubiquitin) cross-link involves residue Lys145. Disordered regions lie at residues 325–368 (QEIT…RLKR) and 389–424 (SGVS…GVSS). The span at 329 to 342 (SETEDLCEKPDDEV) shows a compositional bias: acidic residues. The segment covering 343–359 (KETAHDLDVKSPPEPRS) has biased composition (basic and acidic residues). A compositionally biased stretch (low complexity) spans 403–424 (RSSSESKLPSSGSGKRLSGVSS). 10 ANK repeats span residues 485 to 514 (SGAS…NPNL), 518 to 547 (RGST…SVNA), 551 to 580 (DQWT…SVNE), 584 to 613 (EGRT…DVSL), 617 to 647 (DAWL…SVNA), 651 to 680 (DGRT…DVNV), 684 to 713 (LAQT…GKEA), 717 to 746 (DGYT…DVLA), 750 to 780 (LNQT…DLFD), and 782 to 811 (QGLS…HINL).

It belongs to the protein kinase superfamily. TKL Ser/Thr protein kinase family. In terms of assembly, interacts with PRKCB. Interacts with TRAF1, TRAF2, TRAF3 and TRAF5. Interacts with BIRC2/c-IAP1, BIRC3/c-IAP2 and XIAP/BIRC4. In terms of processing, may be phosphorylated by MAP3K2 and MAP3K3. Post-translationally, proteolytically cleaved by during Fas-induced apoptosis. Cleavage at Asp-388 and Asp-426. Polyubiquitinated with 'Lys-48' and 'Lys-63'-linked chains by BIRC2/c-IAP1 and BIRC3/c-IAP2, leading to activation of NF-kappa-B. As to expression, expressed in hair follicles and skin.

It is found in the cytoplasm. The protein localises to the membrane. It catalyses the reaction L-seryl-[protein] + ATP = O-phospho-L-seryl-[protein] + ADP + H(+). The enzyme catalyses L-threonyl-[protein] + ATP = O-phospho-L-threonyl-[protein] + ADP + H(+). Its function is as follows. Serine/threonine protein kinase. Required for embryonic skin development and correct skin homeostasis in adults, via phosphorylation of PKP1 and subsequent promotion of keratinocyte differentiation and cell adhesion. It is a direct transcriptional target of TP63. Plays a role in NF-kappa-B activation. This Homo sapiens (Human) protein is Receptor-interacting serine/threonine-protein kinase 4 (RIPK4).